The primary structure comprises 572 residues: Nucleolin 1 (572 aa).

Disordered stretches follow at residues 1 to 312 and 488 to 572; these read MGKA…ESAT and DEAK…FGDE. Over residues 7–21 the composition is skewed to low complexity; it reads KSVAVAVAPAAVPAK. The segment covering 27–38 has biased composition (basic and acidic residues); sequence KREAEDEIEKAV. 2 stretches are compositionally biased toward low complexity: residues 45-58 and 72-81; these read AAAA…PAPK and KAASSSSGSS. Composition is skewed to acidic residues over residues 82 to 91, 109 to 122, 144 to 156, 177 to 191, 208 to 222, 235 to 247, and 261 to 276; these read SEEDSSESEE, SSDE…DDED, SESD…DEDE, DSSE…SDED, STDG…EDED, SDEE…ESSD, and ESSE…EEDE. Residues 300–311 show a composition bias toward polar residues; it reads PASNQSQGTESA. RRM domains follow at residues 311-387 and 411-492; these read ATLF…LAHE and QSIF…EAKP. Composition is skewed to basic and acidic residues over residues 488-520 and 528-545; these read DEAK…DRFG and GGRD…DGGR. Residues 553–566 show a composition bias toward polar residues; the sequence is QSRQSAGTASTGKK.

The protein localises to the nucleus. It localises to the nucleolus. Involved in pre-rRNA processing and ribosome assembly. This chain is Nucleolin 1, found in Oryza sativa subsp. japonica (Rice).